Consider the following 450-residue polypeptide: Alpha-2B adrenergic receptor (450 aa).

Over 1-12 (MDHQDPYSVQAT) the chain is Extracellular. A helical transmembrane segment spans residues 13-38 (AAIAAAITFLILFTIFGNALVILAVL). The Cytoplasmic portion of the chain corresponds to 39 to 48 (TSRSLRAPQN). Residues 49-69 (LFLVSLAAADILVATLIIPFS) form a helical membrane-spanning segment. Residues 70–86 (LANELLGYWYFRRTWCE) lie on the Extracellular side of the membrane. Cys85 and Cys164 form a disulfide bridge. A helical transmembrane segment spans residues 87-107 (VYLALDVLFCTSSIVHLCAIS). At 108–128 (LDRYWAVSRALEYNSKRTPRR) the chain is on the cytoplasmic side. A helical membrane pass occupies residues 129–149 (IKCIILTVWLIAAVISLPPLI). The Extracellular portion of the chain corresponds to 150–172 (YKGDQGPQPRGRPQCKLNQEAWY). Residues 173–193 (ILASSIGSFFAPCLIMILVYL) form a helical membrane-spanning segment. The Cytoplasmic segment spans residues 194-368 (RIYLIAKRSN…RRAQLTREKR (175 aa)). Disordered regions lie at residues 204-229 (RRGPRAKGGPGQGESKQPRPDHGGAL) and 241-329 (ASAR…PLQQ). A compositionally biased stretch (basic and acidic residues) spans 246–256 (VNGHSKSTGEK). The segment covering 293–311 (PEDEAEEEEEEEEEEEECE) has biased composition (acidic residues). The segment covering 312–326 (PQAVPVSPASACSPP) has biased composition (low complexity). Residues 369–389 (FTFVLAVVIGVFVLCWFPFFF) form a helical membrane-spanning segment. At 390–405 (SYSLGAICPKHCKVPH) the chain is on the extracellular side. A helical membrane pass occupies residues 406-426 (GLFQFFFWIGYCNSSLNPVIY). At 427 to 450 (TIFNQDFRRAFRRILCRPWTQTAW) the chain is on the cytoplasmic side. The S-palmitoyl cysteine moiety is linked to residue Cys442.

Belongs to the G-protein coupled receptor 1 family. Adrenergic receptor subfamily. ADRA2B sub-subfamily. In terms of assembly, interacts with RAB26. Interacts with PPP1R9B. Interacts with GGA1, GGA2 and GGA3.

The protein resides in the cell membrane. Alpha-2 adrenergic receptors mediate the catecholamine-induced inhibition of adenylate cyclase through the action of G proteins. The rank order of potency for agonists of this receptor is clonidine &gt; norepinephrine &gt; epinephrine = oxymetazoline &gt; dopamine &gt; p-tyramine = phenylephrine &gt; serotonin &gt; p-synephrine / p-octopamine. For antagonists, the rank order is yohimbine &gt; chlorpromazine &gt; phentolamine &gt; mianserine &gt; spiperone &gt; prazosin &gt; alprenolol &gt; propanolol &gt; pindolol. The chain is Alpha-2B adrenergic receptor (ADRA2B) from Homo sapiens (Human).